The sequence spans 590 residues: Aspartate--tRNA(Asp/Asn) ligase (590 aa).

E175 provides a ligand contact to L-aspartate. An aspartate region spans residues Q199–K202. Positions 221 and 450 each coordinate L-aspartate. R221–E223 serves as a coordination point for ATP. E484 is an ATP binding site. R491 contacts L-aspartate. G536–R539 is an ATP binding site.

This sequence belongs to the class-II aminoacyl-tRNA synthetase family. Type 1 subfamily. As to quaternary structure, homodimer.

It is found in the cytoplasm. It catalyses the reaction tRNA(Asx) + L-aspartate + ATP = L-aspartyl-tRNA(Asx) + AMP + diphosphate. Its function is as follows. Aspartyl-tRNA synthetase with relaxed tRNA specificity since it is able to aspartylate not only its cognate tRNA(Asp) but also tRNA(Asn). Reaction proceeds in two steps: L-aspartate is first activated by ATP to form Asp-AMP and then transferred to the acceptor end of tRNA(Asp/Asn). The chain is Aspartate--tRNA(Asp/Asn) ligase from Bradyrhizobium sp. (strain ORS 278).